The following is a 549-amino-acid chain: Teichoic acids export ATP-binding protein TagH (549 aa).

Positions 22-243 constitute an ABC transporter domain; that stretch reads DKLKDLFRKQ…YRAFLKEYNQ (222 aa). 57–64 contacts ATP; the sequence is GLNGSGKS. Residues 244–549 form a unknown region; that stretch reads MSMEDRKKFQ…EIQSISIVKK (306 aa). One can recognise an SH3b domain in the interval 346-415; it reads ENMYMVKSNG…VSTKFIEPFK (70 aa).

Belongs to the ABC transporter superfamily. Teichoic acids exporter (TC 3.A.1.104.1) family. In terms of assembly, the complex is composed of two ATP-binding proteins (TagH) and two transmembrane proteins (TagG).

It localises to the cell membrane. The enzyme catalyses ATP + H2O + teichoic acidSide 1 = ADP + phosphate + teichoic acidSide 2.. In terms of biological role, part of the ABC transporter complex TagGH involved in teichoic acids export. Responsible for energy coupling to the transport system. The polypeptide is Teichoic acids export ATP-binding protein TagH (Bacillus cereus (strain ZK / E33L)).